The primary structure comprises 602 residues: Basic-leucine zipper transcription factor B (602 aa).

Residues 1–10 are compositionally biased toward polar residues; it reads MNQFYQSTTG. Positions 1–128 are disordered; it reads MNQFYQSTTG…NRVNQNLASR (128 aa). Low complexity-rich tracts occupy residues 11–54 and 66–102; these read GQQN…TSTS and QQQIQQQQIQQQQQQQQQQQQQIQQQSVDTPSSYNGD. Residues 58 to 94 are a coiled coil; the sequence is KNKDNQSKQQQIQQQQIQQQQQQQQQQQQQIQQQSVD. Positions 113 to 176 constitute a bZIP domain; sequence ENKKNRNRVN…GVEIMKPDPA (64 aa). The basic motif stretch occupies residues 115-135; it reads KKNRNRVNQNLASRNYRQRKK. The tract at residues 138-145 is leucine-zipper; sequence IKEIEEKL. Disordered regions lie at residues 328-401 and 525-602; these read TNLS…QNNN and QNQT…PSRQ. Composition is skewed to low complexity over residues 336-350, 358-401, and 525-592; these read PNPTSPNSSSVTQST, LTLL…QNNN, and QNQT…SSPY. Residues 509–552 are a coiled coil; it reads TFSQQTQQLQQAQLQLQNQTKQQQQQLQNNNNNNNNNNNNNNSF. Polar residues predominate over residues 593–602; that stretch reads NHHQQQPSRQ.

It belongs to the bZIP family. Binds DNA as a dimer. Heterodimerizes with dimA; in vitro. Also able to form homodimer; in vitro.

It is found in the nucleus. Functionally, transcriptional regulator involved in DIF-1 signaling. DIF-1 (Differentiation Inducing Factor-1) is a signal molecule involved in the differentiation of pstO (prestalk-O) cells. May be a direct activator of ecmA. The polypeptide is Basic-leucine zipper transcription factor B (dimB) (Dictyostelium discoideum (Social amoeba)).